The chain runs to 228 residues: Urease accessory protein UreF 1 (228 aa).

The protein belongs to the UreF family. UreD, UreF and UreG form a complex that acts as a GTP-hydrolysis-dependent molecular chaperone, activating the urease apoprotein by helping to assemble the nickel containing metallocenter of UreC. The UreE protein probably delivers the nickel.

The protein resides in the cytoplasm. Required for maturation of urease via the functional incorporation of the urease nickel metallocenter. The sequence is that of Urease accessory protein UreF 1 from Brucella canis (strain ATCC 23365 / NCTC 10854 / RM-666).